The primary structure comprises 295 residues: MSATIISGNFIASKLREELKQRIRILSETWMQPGLAVILAGDNPASSVYVRNKARTCGELGIHSKVFNFSADTPQKIILRQIQDLNANPEIHGILVQLPLPSHIQMNEVIAAIAIEKDVDGFHPCNVGALATGHALFRPCTPFGVMKMLAEYGIPLQGQHAVVVGRSNIVGKPMALMLLEQGATVTICTSQTRELASHTRSADIIVMATGKANLLTSDMIRTGATVIDVGINRLADGQLCGDVEFSGVKEKAGYITPVPGGVGPMTITMLMNNTIEAAEHAKAKAQIEARCGSMQ.

Residues 165 to 167 (GRS), serine 190, and isoleucine 231 each bind NADP(+).

Belongs to the tetrahydrofolate dehydrogenase/cyclohydrolase family. In terms of assembly, homodimer.

It carries out the reaction (6R)-5,10-methylene-5,6,7,8-tetrahydrofolate + NADP(+) = (6R)-5,10-methenyltetrahydrofolate + NADPH. The catalysed reaction is (6R)-5,10-methenyltetrahydrofolate + H2O = (6R)-10-formyltetrahydrofolate + H(+). It participates in one-carbon metabolism; tetrahydrofolate interconversion. Catalyzes the oxidation of 5,10-methylenetetrahydrofolate to 5,10-methenyltetrahydrofolate and then the hydrolysis of 5,10-methenyltetrahydrofolate to 10-formyltetrahydrofolate. The chain is Bifunctional protein FolD from Nitrosomonas eutropha (strain DSM 101675 / C91 / Nm57).